The chain runs to 696 residues: Interleukin-1 receptor accessory protein-like 1 (696 aa).

The signal sequence occupies residues 1–18; it reads MKAPIPHLILLYATFTQS. In terms of domain architecture, Ig-like C2-type 1 spans 19-134; the sequence is LKVVTKRGSA…YCMKVSISLT (116 aa). The Extracellular segment spans residues 19-357; it reads LKVVTKRGSA…LLHKRELMYT (339 aa). 2 disulfides stabilise this stretch: cysteine 31–cysteine 126 and cysteine 53–cysteine 118. 3 N-linked (GlcNAc...) asparagine glycosylation sites follow: asparagine 63, asparagine 122, and asparagine 138. Intrachain disulfides connect cysteine 143–cysteine 185 and cysteine 164–cysteine 216. Ig-like C2-type domains follow at residues 143–232 and 242–350; these read CYNS…TELT and PKLL…VLLH. 3 N-linked (GlcNAc...) asparagine glycosylation sites follow: asparagine 213, asparagine 264, and asparagine 331. Cysteine 267 and cysteine 334 form a disulfide bridge. The chain crosses the membrane as a helical span at residues 358-378; the sequence is VELAGGLGAILLLLVCLVTIY. Residues 379 to 696 lie on the Cytoplasmic side of the membrane; it reads KCYKIEIMLF…RETSISSVIW (318 aa). Residues 403–559 enclose the TIR domain; that stretch reads KDYDAYLSYT…KFWKRLQYEM (157 aa). Residue glutamate 491 is part of the active site. The segment at 549–644 is interaction with NCS1; that stretch reads SKFWKRLQYE…TGTLPLTSIG (96 aa). Residues 659 to 680 form a disordered region; it reads GQRPQTKSSREQNPDEAHTNSA. Residues 666–676 show a composition bias toward basic and acidic residues; the sequence is SSREQNPDEAH.

It belongs to the interleukin-1 receptor family. As to quaternary structure, homodimer. Interacts (calcium-independent) with NCS1. Interacts (via the first immunoglobilin domain) with PTPRD (via the second immunoglobilin domain); this interaction is PTPRD-splicing-dependent and induces pre- and post-synaptic differentiation of neurons and is required for IL1RAPL1-mediated synapse formation. Detected at low levels in heart, skeletal muscle, ovary, skin, amygdala, caudate nucleus, corpus callosum, hippocampus, substantia nigra and thalamus. Detected at very low levels in tonsil, prostate, testis, small intestine, placenta, colon and fetal liver.

The protein localises to the cell membrane. The protein resides in the cytoplasm. Its subcellular location is the cell projection. It localises to the axon. It is found in the dendrite. The catalysed reaction is NAD(+) + H2O = ADP-D-ribose + nicotinamide + H(+). In terms of biological role, may regulate secretion and presynaptic differentiation through inhibition of the activity of N-type voltage-gated calcium channel. May activate the MAP kinase JNK. Plays a role in neurite outgrowth. During dendritic spine formation can bidirectionally induce pre- and post-synaptic differentiation of neurons by trans-synaptically binding to PTPRD. The protein is Interleukin-1 receptor accessory protein-like 1 (IL1RAPL1) of Homo sapiens (Human).